A 360-amino-acid polypeptide reads, in one-letter code: Peptide chain release factor 1 (360 aa).

Q236 is modified (N5-methylglutamine).

It belongs to the prokaryotic/mitochondrial release factor family. Post-translationally, methylated by PrmC. Methylation increases the termination efficiency of RF1.

The protein resides in the cytoplasm. Peptide chain release factor 1 directs the termination of translation in response to the peptide chain termination codons UAG and UAA. In Limosilactobacillus reuteri subsp. reuteri (strain JCM 1112) (Lactobacillus reuteri), this protein is Peptide chain release factor 1.